A 230-amino-acid polypeptide reads, in one-letter code: Cytochrome c oxidase subunit 2 (230 aa).

Residues methionine 1–serine 14 lie on the Mitochondrial intermembrane side of the membrane. Residues proline 15–methionine 45 traverse the membrane as a helical segment. At valine 46–glutamine 59 the chain is on the mitochondrial matrix side. Residues glutamate 60 to methionine 87 traverse the membrane as a helical segment. Topologically, residues aspartate 88–alanine 230 are mitochondrial intermembrane. The Cu cation site is built by histidine 161, cysteine 196, glutamate 198, cysteine 200, histidine 204, and methionine 207. Residue glutamate 198 coordinates Mg(2+).

It belongs to the cytochrome c oxidase subunit 2 family. In terms of assembly, component of the cytochrome c oxidase (complex IV, CIV), a multisubunit enzyme composed of 14 subunits. The complex is composed of a catalytic core of 3 subunits MT-CO1, MT-CO2 and MT-CO3, encoded in the mitochondrial DNA, and 11 supernumerary subunits COX4I, COX5A, COX5B, COX6A, COX6B, COX6C, COX7A, COX7B, COX7C, COX8 and NDUFA4, which are encoded in the nuclear genome. The complex exists as a monomer or a dimer and forms supercomplexes (SCs) in the inner mitochondrial membrane with NADH-ubiquinone oxidoreductase (complex I, CI) and ubiquinol-cytochrome c oxidoreductase (cytochrome b-c1 complex, complex III, CIII), resulting in different assemblies (supercomplex SCI(1)III(2)IV(1) and megacomplex MCI(2)III(2)IV(2)). Found in a complex with TMEM177, COA6, COX18, COX20, SCO1 and SCO2. Interacts with TMEM177 in a COX20-dependent manner. Interacts with COX20. Interacts with COX16. The cofactor is Cu cation.

The protein resides in the mitochondrion inner membrane. The catalysed reaction is 4 Fe(II)-[cytochrome c] + O2 + 8 H(+)(in) = 4 Fe(III)-[cytochrome c] + 2 H2O + 4 H(+)(out). In terms of biological role, component of the cytochrome c oxidase, the last enzyme in the mitochondrial electron transport chain which drives oxidative phosphorylation. The respiratory chain contains 3 multisubunit complexes succinate dehydrogenase (complex II, CII), ubiquinol-cytochrome c oxidoreductase (cytochrome b-c1 complex, complex III, CIII) and cytochrome c oxidase (complex IV, CIV), that cooperate to transfer electrons derived from NADH and succinate to molecular oxygen, creating an electrochemical gradient over the inner membrane that drives transmembrane transport and the ATP synthase. Cytochrome c oxidase is the component of the respiratory chain that catalyzes the reduction of oxygen to water. Electrons originating from reduced cytochrome c in the intermembrane space (IMS) are transferred via the dinuclear copper A center (CU(A)) of subunit 2 and heme A of subunit 1 to the active site in subunit 1, a binuclear center (BNC) formed by heme A3 and copper B (CU(B)). The BNC reduces molecular oxygen to 2 water molecules using 4 electrons from cytochrome c in the IMS and 4 protons from the mitochondrial matrix. The polypeptide is Cytochrome c oxidase subunit 2 (mt-co2) (Oncorhynchus mykiss (Rainbow trout)).